Consider the following 645-residue polypeptide: 1-deoxy-D-xylulose-5-phosphate synthase (645 aa).

Thiamine diphosphate is bound by residues histidine 79 and 120-122 (AHS). Aspartate 155 provides a ligand contact to Mg(2+). Residues 156 to 157 (GA), asparagine 184, tyrosine 293, and glutamate 375 each bind thiamine diphosphate. Asparagine 184 contributes to the Mg(2+) binding site.

The protein belongs to the transketolase family. DXPS subfamily. As to quaternary structure, homodimer. Requires Mg(2+) as cofactor. Thiamine diphosphate serves as cofactor.

It catalyses the reaction D-glyceraldehyde 3-phosphate + pyruvate + H(+) = 1-deoxy-D-xylulose 5-phosphate + CO2. The protein operates within metabolic intermediate biosynthesis; 1-deoxy-D-xylulose 5-phosphate biosynthesis; 1-deoxy-D-xylulose 5-phosphate from D-glyceraldehyde 3-phosphate and pyruvate: step 1/1. In terms of biological role, catalyzes the acyloin condensation reaction between C atoms 2 and 3 of pyruvate and glyceraldehyde 3-phosphate to yield 1-deoxy-D-xylulose-5-phosphate (DXP). The chain is 1-deoxy-D-xylulose-5-phosphate synthase from Ruegeria sp. (strain TM1040) (Silicibacter sp.).